Reading from the N-terminus, the 322-residue chain is Pre-mRNA-splicing factor NTR2 (322 aa).

Residues 1–30 (MAIKKRNKIRLPSGSPEEVGIDGSAHKPMQ) are disordered. The residue at position 40 (Ser-40) is a Phosphoserine. Residues 113 to 137 (LLSDSSEAGSSSEGEHISSIPTRGE) are disordered. The segment covering 115–132 (SDSSEAGSSSEGEHISSI) has biased composition (low complexity). Residues Ser-153 and Ser-197 each carry the phosphoserine modification.

As to quaternary structure, component of the NTR complex (NTC-related complex), composed of NTR1, NTR2 and PRP43. Interacts with CLF1, NTR1 and PRP43.

The protein localises to the cytoplasm. It is found in the nucleus. Functionally, involved in pre-mRNA splicing and spliceosome disassembly. Promotes release of excised lariat intron from the spliceosome by acting as a receptor for PRP43. This targeting of PRP43 leads to disassembly of the spliceosome with the separation of the U2, U5, U6 snRNPs and the NTC complex. This is Pre-mRNA-splicing factor NTR2 (NTR2) from Saccharomyces cerevisiae (strain ATCC 204508 / S288c) (Baker's yeast).